The chain runs to 353 residues: Fe(3+) ions import ATP-binding protein FbpC 1 (353 aa).

An ABC transporter domain is found at 9-239; it reads VVFRNICKQF…PASAFIADFM (231 aa). 41–48 provides a ligand contact to ATP; sequence GPSGCGKT.

Belongs to the ABC transporter superfamily. Fe(3+) ion importer (TC 3.A.1.10) family. In terms of assembly, the complex is composed of two ATP-binding proteins (FbpC), two transmembrane proteins (FbpB) and a solute-binding protein (FbpA).

It localises to the cell inner membrane. It carries out the reaction Fe(3+)(out) + ATP + H2O = Fe(3+)(in) + ADP + phosphate + H(+). Part of the ABC transporter complex FbpABC involved in Fe(3+) ions import. Responsible for energy coupling to the transport system. This is Fe(3+) ions import ATP-binding protein FbpC 1 from Rhizobium meliloti (strain 1021) (Ensifer meliloti).